Consider the following 110-residue polypeptide: Nucleotide-binding protein HI1146 homolog (110 aa).

Belongs to the RapZ-like family.

Displays ATPase and GTPase activities. This Aggregatibacter actinomycetemcomitans (Actinobacillus actinomycetemcomitans) protein is Nucleotide-binding protein HI1146 homolog.